The primary structure comprises 464 residues: ATP synthase subunit beta (464 aa).

Residue Gly-150–Thr-157 coordinates ATP.

Belongs to the ATPase alpha/beta chains family. F-type ATPases have 2 components, CF(1) - the catalytic core - and CF(0) - the membrane proton channel. CF(1) has five subunits: alpha(3), beta(3), gamma(1), delta(1), epsilon(1). CF(0) has three main subunits: a(1), b(2) and c(9-12). The alpha and beta chains form an alternating ring which encloses part of the gamma chain. CF(1) is attached to CF(0) by a central stalk formed by the gamma and epsilon chains, while a peripheral stalk is formed by the delta and b chains.

The protein resides in the cell membrane. It carries out the reaction ATP + H2O + 4 H(+)(in) = ADP + phosphate + 5 H(+)(out). Functionally, produces ATP from ADP in the presence of a proton gradient across the membrane. The catalytic sites are hosted primarily by the beta subunits. This is ATP synthase subunit beta from Dehalococcoides mccartyi (strain ATCC BAA-2100 / JCM 16839 / KCTC 5957 / BAV1).